Reading from the N-terminus, the 357-residue chain is NADH-quinone oxidoreductase subunit H (357 aa).

Transmembrane regions (helical) follow at residues 20-40, 92-112, 127-147, 165-185, 206-226, 268-288, 294-314, and 329-349; these read WLVV…ILCV, ILFI…WAVV, LLYV…AGWA, VSYE…SGSL, FLSW…ISAV, ILLS…PIDI, IPGW…FIWF, and LGWK…AIWM.

This sequence belongs to the complex I subunit 1 family. As to quaternary structure, NDH-1 is composed of 14 different subunits. Subunits NuoA, H, J, K, L, M, N constitute the membrane sector of the complex.

It is found in the cell inner membrane. It catalyses the reaction a quinone + NADH + 5 H(+)(in) = a quinol + NAD(+) + 4 H(+)(out). In terms of biological role, NDH-1 shuttles electrons from NADH, via FMN and iron-sulfur (Fe-S) centers, to quinones in the respiratory chain. The immediate electron acceptor for the enzyme in this species is believed to be ubiquinone. Couples the redox reaction to proton translocation (for every two electrons transferred, four hydrogen ions are translocated across the cytoplasmic membrane), and thus conserves the redox energy in a proton gradient. This subunit may bind ubiquinone. This is NADH-quinone oxidoreductase subunit H from Bordetella avium (strain 197N).